The chain runs to 353 residues: Delta-aminolevulinic acid dehydratase (353 aa).

The Schiff-base intermediate with substrate role is filled by Lys-221. The 5-aminolevulinate site is built by Arg-231 and Lys-244. Mg(2+) is bound at residue Glu-260. The Schiff-base intermediate with substrate role is filled by Lys-275. Positions 301 and 340 each coordinate 5-aminolevulinate.

The protein belongs to the ALAD family. In terms of assembly, homooctamer. Mg(2+) serves as cofactor.

It carries out the reaction 2 5-aminolevulinate = porphobilinogen + 2 H2O + H(+). The protein operates within porphyrin-containing compound metabolism; protoporphyrin-IX biosynthesis; coproporphyrinogen-III from 5-aminolevulinate: step 1/4. Catalyzes an early step in the biosynthesis of tetrapyrroles. Binds two molecules of 5-aminolevulinate per subunit, each at a distinct site, and catalyzes their condensation to form porphobilinogen. Required for nodule development. In Bradyrhizobium diazoefficiens (strain JCM 10833 / BCRC 13528 / IAM 13628 / NBRC 14792 / USDA 110), this protein is Delta-aminolevulinic acid dehydratase (hemB).